Here is a 377-residue protein sequence, read N- to C-terminus: Succinyl-diaminopimelate desuccinylase (377 aa).

Zn(2+) is bound at residue His-66. Asp-68 is a catalytic residue. Residue Asp-99 coordinates Zn(2+). The active-site Proton acceptor is Glu-133. Residues Glu-134, Glu-163, and His-349 each coordinate Zn(2+).

It belongs to the peptidase M20A family. DapE subfamily. As to quaternary structure, homodimer. It depends on Zn(2+) as a cofactor. Co(2+) serves as cofactor.

It carries out the reaction N-succinyl-(2S,6S)-2,6-diaminopimelate + H2O = (2S,6S)-2,6-diaminopimelate + succinate. The protein operates within amino-acid biosynthesis; L-lysine biosynthesis via DAP pathway; LL-2,6-diaminopimelate from (S)-tetrahydrodipicolinate (succinylase route): step 3/3. Functionally, catalyzes the hydrolysis of N-succinyl-L,L-diaminopimelic acid (SDAP), forming succinate and LL-2,6-diaminopimelate (DAP), an intermediate involved in the bacterial biosynthesis of lysine and meso-diaminopimelic acid, an essential component of bacterial cell walls. The chain is Succinyl-diaminopimelate desuccinylase from Legionella pneumophila (strain Lens).